The following is a 187-amino-acid chain: MKNIIFMGPPGAGKGTQAKILCARLSIPQISTGDILREAVKNQTPMGIEAKRYMDAGDLVPDSVVIGIIKDRIREADCKNGFLLDGFPRTVEQADALDALLKNEGKSIDKAINLEVPDGELLKRLLGRAEIEGRADDNEATIKNRLDNYNKKTLPLLDFYAAQKKLSQVNGVGTLEEVTSLIQRELV.

An ATP-binding site is contributed by 11–16 (GAGKGT). The tract at residues 31–60 (STGDILREAVKNQTPMGIEAKRYMDAGDLV) is NMP. Residues T32, R37, 58 to 60 (DLV), 86 to 89 (GFPR), and Q93 each bind AMP. The tract at residues 127-137 (GRAEIEGRADD) is LID. Position 128 (R128) interacts with ATP. Residues R134 and R145 each coordinate AMP. Residue G173 participates in ATP binding.

Belongs to the adenylate kinase family. In terms of assembly, monomer.

The protein resides in the cytoplasm. It catalyses the reaction AMP + ATP = 2 ADP. It participates in purine metabolism; AMP biosynthesis via salvage pathway; AMP from ADP: step 1/1. Its function is as follows. Catalyzes the reversible transfer of the terminal phosphate group between ATP and AMP. Plays an important role in cellular energy homeostasis and in adenine nucleotide metabolism. The chain is Adenylate kinase from Leptospira borgpetersenii serovar Hardjo-bovis (strain JB197).